Consider the following 261-residue polypeptide: Snake venom serine protease (261 aa).

The first 20 residues, 1–20, serve as a signal peptide directing secretion; sequence MALIGVLANLLILCLSYART. The propeptide occupies 21-24; that stretch reads APDR. Residues 25–249 enclose the Peptidase S1 domain; the sequence is IIGGLECNQN…YIDWIQDIMA (225 aa). 6 disulfides stabilise this stretch: C31/C163, C50/C66, C98/C256, C142/C210, C174/C189, and C200/C225. Residue H65 is the Charge relay system of the active site. Residue N103 is glycosylated (N-linked (GlcNAc...) asparagine). The active-site Charge relay system is D110. N117 and N121 each carry an N-linked (GlcNAc...) asparagine glycan. The Charge relay system role is filled by S204.

It belongs to the peptidase S1 family. Snake venom subfamily. As to quaternary structure, monomer. As to expression, expressed by the venom gland.

Its subcellular location is the secreted. Snake venom serine protease that may act in the hemostasis system of the prey. The protein is Snake venom serine protease of Philodryas olfersii (Green snake).